A 103-amino-acid polypeptide reads, in one-letter code: Nucleoid-associated protein BH0035 (103 aa).

Over residues 1–20 (MKNMGQMMKQMQKMQKQMMK) the composition is skewed to low complexity. Residues 1–29 (MKNMGQMMKQMQKMQKQMMKAQEELKEKT) form a disordered region.

It belongs to the YbaB/EbfC family. As to quaternary structure, homodimer.

The protein resides in the cytoplasm. It is found in the nucleoid. Functionally, binds to DNA and alters its conformation. May be involved in regulation of gene expression, nucleoid organization and DNA protection. This Halalkalibacterium halodurans (strain ATCC BAA-125 / DSM 18197 / FERM 7344 / JCM 9153 / C-125) (Bacillus halodurans) protein is Nucleoid-associated protein BH0035.